A 361-amino-acid chain; its full sequence is Phosphoserine aminotransferase (361 aa).

Arg42 is a binding site for L-glutamate. Pyridoxal 5'-phosphate contacts are provided by residues 76–77 (AR), Trp102, Thr153, Asp173, and Gln196. Residue Lys197 is modified to N6-(pyridoxal phosphate)lysine. 238 to 239 (NT) is a binding site for pyridoxal 5'-phosphate.

It belongs to the class-V pyridoxal-phosphate-dependent aminotransferase family. SerC subfamily. As to quaternary structure, homodimer. Pyridoxal 5'-phosphate serves as cofactor.

The protein localises to the cytoplasm. The catalysed reaction is O-phospho-L-serine + 2-oxoglutarate = 3-phosphooxypyruvate + L-glutamate. It carries out the reaction 4-(phosphooxy)-L-threonine + 2-oxoglutarate = (R)-3-hydroxy-2-oxo-4-phosphooxybutanoate + L-glutamate. It participates in amino-acid biosynthesis; L-serine biosynthesis; L-serine from 3-phospho-D-glycerate: step 2/3. It functions in the pathway cofactor biosynthesis; pyridoxine 5'-phosphate biosynthesis; pyridoxine 5'-phosphate from D-erythrose 4-phosphate: step 3/5. Functionally, catalyzes the reversible conversion of 3-phosphohydroxypyruvate to phosphoserine and of 3-hydroxy-2-oxo-4-phosphonooxybutanoate to phosphohydroxythreonine. In Yersinia pestis (strain Pestoides F), this protein is Phosphoserine aminotransferase.